The following is a 322-amino-acid chain: Cytochrome f (322 aa).

Positions 1–37 (MQNRKTYAYDWIKKWMIKSISTLIIINTMVWSSVSEA) are cleaved as a signal peptide. Heme contacts are provided by tyrosine 38, cysteine 58, cysteine 61, and histidine 62. The helical transmembrane segment at 285-307 (VLRVQGLLLFFASVILAQIFLVL) threads the bilayer.

It belongs to the cytochrome f family. The 4 large subunits of the cytochrome b6-f complex are cytochrome b6, subunit IV (17 kDa polypeptide, petD), cytochrome f and the Rieske protein, while the 4 small subunits are PetG, PetL, PetM and PetN. The complex functions as a dimer. It depends on heme as a cofactor.

The protein resides in the plastid. It localises to the chloroplast thylakoid membrane. Its function is as follows. Component of the cytochrome b6-f complex, which mediates electron transfer between photosystem II (PSII) and photosystem I (PSI), cyclic electron flow around PSI, and state transitions. This chain is Cytochrome f (petA), found in Anthoceros angustus (Hornwort).